Here is a 333-residue protein sequence, read N- to C-terminus: Adenosine deaminase (333 aa).

The Zn(2+) site is built by His12 and His14. Residues His14, Asp16, and Gly170 each coordinate substrate. His197 is a binding site for Zn(2+). Residue Glu200 is the Proton donor of the active site. Asp278 provides a ligand contact to Zn(2+). Asp279 contacts substrate.

The protein belongs to the metallo-dependent hydrolases superfamily. Adenosine and AMP deaminases family. Adenosine deaminase subfamily. Zn(2+) is required as a cofactor.

The enzyme catalyses adenosine + H2O + H(+) = inosine + NH4(+). The catalysed reaction is 2'-deoxyadenosine + H2O + H(+) = 2'-deoxyinosine + NH4(+). In terms of biological role, catalyzes the hydrolytic deamination of adenosine and 2-deoxyadenosine. This is Adenosine deaminase from Aliivibrio fischeri (strain MJ11) (Vibrio fischeri).